The primary structure comprises 434 residues: uncharacterized protein (434 aa).

The N-terminal stretch at M1 to G17 is a signal peptide. Helical transmembrane passes span A48–L68, E70–A90, Y112–F132, T141–V161, W173–T193, Y206–V226, Y232–L252, E271–Y291, T305–F325, W344–L364, A380–F400, and F404–I424.

It is found in the membrane. This is an uncharacterized protein from Arabidopsis thaliana (Mouse-ear cress).